Reading from the N-terminus, the 98-residue chain is Integration host factor subunit alpha (98 aa).

The interval 49–71 (FGNFDLRDKNQRPGRNPKTGEDI) is disordered.

It belongs to the bacterial histone-like protein family. Heterodimer of an alpha and a beta chain.

Functionally, this protein is one of the two subunits of integration host factor, a specific DNA-binding protein that functions in genetic recombination as well as in transcriptional and translational control. This is Integration host factor subunit alpha from Shewanella oneidensis (strain ATCC 700550 / JCM 31522 / CIP 106686 / LMG 19005 / NCIMB 14063 / MR-1).